Consider the following 318-residue polypeptide: MEIKNKKLKETSDVLLSLTYLIKSYEYRDRGNLLESLYYLDKALELNPDFKFAKFLKAISLAILGDINKSIECLEDITSNSNDPVAYALLGQLYELLGNFDNALECYEKSLGIEEKFATAFFLKVLCLGLSGKYDELLKCCDRLISFAPNFIPAYIIKANMLRKLGRYEEALACVNKVLELKENDTNAIYLKALILNRIGNCDEALKYYEKLIDELNVTWIEVIREAIYLSFLFNKLDKAEKYIEMGLKLRPDDASLWYFKGKLYEKQNKFEEALKYYNKAIQLMPHHTKALLAKARVLEKLGRIEESIECYNKALDR.

8 TPR repeats span residues S17–F50, P84–F117, T119–F151, I152–D185, T186–T219, I221–D254, A255–H288, and T289–R318.

The sequence is that of TPR repeat-containing protein MJ0940 from Methanocaldococcus jannaschii (strain ATCC 43067 / DSM 2661 / JAL-1 / JCM 10045 / NBRC 100440) (Methanococcus jannaschii).